A 427-amino-acid chain; its full sequence is MSLLSEFQAQLQHSRYLIAFSGGADSTALLALFAKSRQNRPHLQLRAIHIHHGLNVAANDWAAHCRRICEKLEVPLIIERVEINKKSGIEQGAREARYAAIRCHRHADEIVATAHHLQDQTETFLLALKRGSGIKGLGAMQRESRLYGMPIFRPLLPFGKTELENYLRAQSLDWIEDDSNADNRYDRNFLRNRILPVLRRRWTDFDLAVSRSAQHCYEQERLIRELLTPAFEKNYRKTDRTFALSDFAGYSPNKQNALLRMWLTACRVPMPEKMQLAQLIRDVVFAKPDAVPQFVLGEQVIRRYQNRLYLTPHYADVTDFRARLTVNKTVELPDNLGRLHLIKNTKNLTALWQYEDWQYSADFPLGEQQISVGFGYAGKVKLHARDMSRDIKKVWQKYAVPPWRRTRIPLIFVDGKLKSAVGFFDVF.

21–26 (SGGADS) contributes to the ATP binding site.

It belongs to the tRNA(Ile)-lysidine synthase family.

The protein localises to the cytoplasm. The enzyme catalyses cytidine(34) in tRNA(Ile2) + L-lysine + ATP = lysidine(34) in tRNA(Ile2) + AMP + diphosphate + H(+). Its function is as follows. Ligates lysine onto the cytidine present at position 34 of the AUA codon-specific tRNA(Ile) that contains the anticodon CAU, in an ATP-dependent manner. Cytidine is converted to lysidine, thus changing the amino acid specificity of the tRNA from methionine to isoleucine. This chain is tRNA(Ile)-lysidine synthase, found in Actinobacillus succinogenes (strain ATCC 55618 / DSM 22257 / CCUG 43843 / 130Z).